Reading from the N-terminus, the 148-residue chain is Macrodomain Ter protein (148 aa).

It belongs to the MatP family. As to quaternary structure, homodimer.

It is found in the cytoplasm. In terms of biological role, required for spatial organization of the terminus region of the chromosome (Ter macrodomain) during the cell cycle. Prevents early segregation of duplicated Ter macrodomains during cell division. Binds specifically to matS, which is a 13 bp signature motif repeated within the Ter macrodomain. The sequence is that of Macrodomain Ter protein from Photobacterium profundum (strain SS9).